The primary structure comprises 658 residues: Trimethylamine N-oxide transport system permease protein TmoV (658 aa).

The next 15 membrane-spanning stretches (helical) occupy residues 20 to 40 (LGLAMIGLAVMMTLLHYAGLL), 103 to 123 (IGPIPWSAIAAMTAVVGYYLG), 127 to 147 (MALLAGGTFVWTAMIGQWDIA), 153 to 173 (VLVVAAPLAFAIGLVLGISAW), 185 to 205 (VLAVLQTLPFFTYLLPAVIFF), 212 to 232 (GAVATTVYAIPPMILMTTLGL), 273 to 293 (VIMLCLAMVVLTAFIGMPGLG), 300 to 320 (MGSFKIGRSFEIGVTIVLLAV), 349 to 369 (FLLMAIGAFVGFTLIAQVVPI), 420 to 440 (FMLSIPTVAFVLFISAAALLV), 447 to 467 (VLAAAFFGLVALTGWWDRSVI), 469 to 489 (LYSVLAAVSIALLLGVPIGVV), 517 to 537 (IPAIMLFGITATSVVMSILIF), 585 to 605 (AVGFNQAIMFAFFMVIIAAFI), and 627 to 647 (FVLGICVTLMALTFDMVIMKW). The region spanning 147–326 (AMQTMSVLVV…LLAVTLDRMS (180 aa)) is the ABC transmembrane type-1 1 domain. The ABC transmembrane type-1 2 domain maps to 465 to 644 (SVITLYSVLA…LMALTFDMVI (180 aa)).

Belongs to the binding-protein-dependent transport system permease family. As to quaternary structure, the complex is probably composed of two ATP-binding proteins (TmoW), two transmembrane proteins (TmoV) and a solute-binding protein (TmoX).

The protein localises to the cell inner membrane. Its function is as follows. Part of the ABC transporter complex TmoXWV involved in trimethylamine N-oxide (TMAO) import. Responsible for the translocation of the substrate across the membrane. Is specific for TMAO and essential for TMAO metabolism. The polypeptide is Trimethylamine N-oxide transport system permease protein TmoV (Ruegeria pomeroyi (strain ATCC 700808 / DSM 15171 / DSS-3) (Silicibacter pomeroyi)).